Reading from the N-terminus, the 105-residue chain is Early E3A 12.1 kDa protein (105 aa).

This sequence belongs to the adenoviridae E3A-2 family.

Functionally, not yet known. This is Early E3A 12.1 kDa protein from Human adenovirus A serotype 12 (HAdV-12).